The chain runs to 532 residues: 2,3-bisphosphoglycerate-independent phosphoglycerate mutase (532 aa).

Mn(2+)-binding residues include Asp15 and Ser65. Ser65 acts as the Phosphoserine intermediate in catalysis. Residues His126, Arg156–Asp157, Arg188, Arg194, Arg258–Arg261, and Lys331 each bind substrate. Residues Asp398, His402, Asp439, His440, and His457 each contribute to the Mn(2+) site.

This sequence belongs to the BPG-independent phosphoglycerate mutase family. In terms of assembly, monomer. Requires Mn(2+) as cofactor.

The enzyme catalyses (2R)-2-phosphoglycerate = (2R)-3-phosphoglycerate. It functions in the pathway carbohydrate degradation; glycolysis; pyruvate from D-glyceraldehyde 3-phosphate: step 3/5. Functionally, catalyzes the interconversion of 2-phosphoglycerate and 3-phosphoglycerate. The sequence is that of 2,3-bisphosphoglycerate-independent phosphoglycerate mutase from Cyanothece sp. (strain PCC 7425 / ATCC 29141).